The sequence spans 439 residues: GTPase Der (439 aa).

EngA-type G domains follow at residues 3–167 (PTVA…DKVG) and 176–351 (IKVA…GNYT). GTP-binding positions include 9-16 (GRPNVGKS), 56-60 (DTGGI), 119-122 (NKID), 182-189 (GKPNTGKS), 229-233 (DTAGL), and 294-297 (NKWD). The 85-residue stretch at 352 to 436 (RRITTGQIND…PIVFLIREKG (85 aa)) folds into the KH-like domain.

It belongs to the TRAFAC class TrmE-Era-EngA-EngB-Septin-like GTPase superfamily. EngA (Der) GTPase family. As to quaternary structure, associates with the 50S ribosomal subunit.

Its function is as follows. GTPase that plays an essential role in the late steps of ribosome biogenesis. The protein is GTPase Der of Caldicellulosiruptor saccharolyticus (strain ATCC 43494 / DSM 8903 / Tp8T 6331).